A 330-amino-acid chain; its full sequence is Methionyl-tRNA formyltransferase (330 aa).

116-119 is a (6S)-5,6,7,8-tetrahydrofolate binding site; the sequence is SLLP.

This sequence belongs to the Fmt family.

The enzyme catalyses L-methionyl-tRNA(fMet) + (6R)-10-formyltetrahydrofolate = N-formyl-L-methionyl-tRNA(fMet) + (6S)-5,6,7,8-tetrahydrofolate + H(+). Functionally, attaches a formyl group to the free amino group of methionyl-tRNA(fMet). The formyl group appears to play a dual role in the initiator identity of N-formylmethionyl-tRNA by promoting its recognition by IF2 and preventing the misappropriation of this tRNA by the elongation apparatus. The sequence is that of Methionyl-tRNA formyltransferase from Nitratidesulfovibrio vulgaris (strain DP4) (Desulfovibrio vulgaris).